A 900-amino-acid chain; its full sequence is 3'-5' exonuclease DinG (900 aa).

Residues 8–161 (VVDLETTGNQ…DEDATTTALL (154 aa)) enclose the Exonuclease domain. The 256-residue stretch at 241–496 (SEVVKSLNLT…KAIDKLEQQR (256 aa)) folds into the Helicase ATP-binding domain. 276–283 (APLGSGKS) contacts ATP. The short motif at 448–451 (DEAH) is the DEAH box element. A Helicase C-terminal domain is found at 713 to 893 (DYIQEYVTIT…QFSKLVNKIQ (181 aa)).

Belongs to the helicase family. DinG subfamily. Type 2 sub-subfamily.

Functionally, 3'-5' exonuclease. The chain is 3'-5' exonuclease DinG from Staphylococcus haemolyticus (strain JCSC1435).